Reading from the N-terminus, the 316-residue chain is Arabinooligosaccharides transport system permease protein AraP (316 aa).

7 helical membrane-spanning segments follow: residues 32 to 52 (VVPY…SFYP), 94 to 114 (TYMI…AVLL), 128 to 148 (ALFL…RLMF), 178 to 198 (MFLM…LYFL), 224 to 244 (FYVT…ISVI), 254 to 274 (FVFW…GYLY), and 283 to 303 (MGFG…ISIT). The 216-residue stretch at 89 to 304 (LQNTTTYMIL…LIIFVISITQ (216 aa)) folds into the ABC transmembrane type-1 domain.

It belongs to the binding-protein-dependent transport system permease family. MalFG subfamily. As to quaternary structure, the complex is composed of two ATP-binding proteins (MsmX), two transmembrane proteins (AraP and AraQ) and a solute-binding protein (AraN).

The protein resides in the cell membrane. Functionally, part of the ABC transporter complex AraNPQ involved in the uptake of arabinooligosaccharides. Responsible for the translocation of the substrate across the membrane. The protein is Arabinooligosaccharides transport system permease protein AraP (araP) of Halalkalibacterium halodurans (strain ATCC BAA-125 / DSM 18197 / FERM 7344 / JCM 9153 / C-125) (Bacillus halodurans).